Here is a 329-residue protein sequence, read N- to C-terminus: UPF0421 protein SH1063 (329 aa).

A run of 5 helical transmembrane segments spans residues 25-45, 60-80, 87-107, 108-128, and 131-151; these read LFCL…IVTI, LPAT…FGDP, FSAL…GTTV, AVLT…FNFF, and LLTA…VLPP.

Belongs to the UPF0421 family.

Its subcellular location is the cell membrane. The sequence is that of UPF0421 protein SH1063 from Staphylococcus haemolyticus (strain JCSC1435).